The chain runs to 137 residues: Large-conductance mechanosensitive channel (137 aa).

Helical transmembrane passes span 9–29 (AFAV…GAAF) and 79–99 (IQTI…VKAI).

This sequence belongs to the MscL family. As to quaternary structure, homopentamer.

The protein resides in the cell inner membrane. Its function is as follows. Channel that opens in response to stretch forces in the membrane lipid bilayer. May participate in the regulation of osmotic pressure changes within the cell. The chain is Large-conductance mechanosensitive channel from Pseudomonas aeruginosa (strain UCBPP-PA14).